Here is a 562-residue protein sequence, read N- to C-terminus: NAD-dependent malic enzyme (562 aa).

The active-site Proton donor is the tyrosine 101. Arginine 154 is an NAD(+) binding site. The Proton acceptor role is filled by lysine 172. Positions 243, 244, and 267 each coordinate a divalent metal cation. Aspartate 267 and asparagine 415 together coordinate NAD(+).

The protein belongs to the malic enzymes family. As to quaternary structure, homotetramer. Mg(2+) is required as a cofactor. It depends on Mn(2+) as a cofactor.

It catalyses the reaction (S)-malate + NAD(+) = pyruvate + CO2 + NADH. The enzyme catalyses oxaloacetate + H(+) = pyruvate + CO2. This is NAD-dependent malic enzyme from Aliivibrio fischeri (strain MJ11) (Vibrio fischeri).